Reading from the N-terminus, the 554-residue chain is (E)-beta-caryophyllene synthase (554 aa).

Mn(2+) contacts are provided by aspartate 313 and aspartate 317. A DDXXD motif motif is present at residues 313–317 (DDTYD). Homodimerization regions lie at residues 319–325 (YGTLDEL) and 391–427 (EAQW…LAVI). Aspartate 457 and glutamate 465 together coordinate Mn(2+).

This sequence belongs to the terpene synthase family. In terms of assembly, homodimer. It depends on Mn(2+) as a cofactor. The cofactor is Mg(2+). Expressed in peltate glandular trichomes. Present at low levels in flowers, leaves and stems.

It carries out the reaction (2E,6E)-farnesyl diphosphate = (-)-(E)-beta-caryophyllene + diphosphate. It catalyses the reaction (2E,6E)-farnesyl diphosphate = alpha-humulene + diphosphate. The protein operates within secondary metabolite biosynthesis; terpenoid biosynthesis. Involved in the biosynthesis of phenolic sesquiterpenes natural products. Sesquiterpene synthase converting (2E,6E)-farnesyl diphosphate (FPP) to (E)-beta-caryophyllene and alpha-humulene. This Origanum vulgare (Wild marjoram) protein is (E)-beta-caryophyllene synthase.